Reading from the N-terminus, the 236-residue chain is Phosphoglycolate phosphatase (236 aa).

Aspartate 14 functions as the Nucleophile in the catalytic mechanism. Mg(2+) contacts are provided by aspartate 14, aspartate 16, and aspartate 177.

The protein belongs to the HAD-like hydrolase superfamily. CbbY/CbbZ/Gph/YieH family. Mg(2+) is required as a cofactor.

It catalyses the reaction 2-phosphoglycolate + H2O = glycolate + phosphate. It functions in the pathway organic acid metabolism; glycolate biosynthesis; glycolate from 2-phosphoglycolate: step 1/1. Specifically catalyzes the dephosphorylation of 2-phosphoglycolate. Is involved in the dissimilation of the intracellular 2-phosphoglycolate formed during the DNA repair of 3'-phosphoglycolate ends, a major class of DNA lesions induced by oxidative stress. The sequence is that of Phosphoglycolate phosphatase from Neisseria gonorrhoeae (strain ATCC 700825 / FA 1090).